We begin with the raw amino-acid sequence, 489 residues long: Rhamnulokinase (489 aa).

13–17 (ASSGR) is an ATP binding site. Cysteines 68 and 222 form a disulfide. Substrate-binding positions include G83 and 236-238 (HDT). D237 serves as the catalytic Proton acceptor. T259 is a binding site for ATP. N296 provides a ligand contact to substrate. Q304 provides a ligand contact to ATP. C353 and C370 are disulfide-bonded. G402 lines the ATP pocket. C413 and C417 are joined by a disulfide.

The protein belongs to the rhamnulokinase family. The cofactor is Mg(2+).

The catalysed reaction is L-rhamnulose + ATP = L-rhamnulose 1-phosphate + ADP + H(+). The protein operates within carbohydrate degradation; L-rhamnose degradation; glycerone phosphate from L-rhamnose: step 2/3. Its function is as follows. Involved in the catabolism of L-rhamnose (6-deoxy-L-mannose). Catalyzes the transfer of the gamma-phosphate group from ATP to the 1-hydroxyl group of L-rhamnulose to yield L-rhamnulose 1-phosphate. The protein is Rhamnulokinase of Salmonella agona (strain SL483).